Consider the following 168-residue polypeptide: Small ribosomal subunit protein uS5 (168 aa).

The region spanning 14 to 77 (FEERVVSINR…EAAKKNLITV (64 aa)) is the S5 DRBM domain.

The protein belongs to the universal ribosomal protein uS5 family. As to quaternary structure, part of the 30S ribosomal subunit. Contacts proteins S4 and S8.

Its function is as follows. With S4 and S12 plays an important role in translational accuracy. Functionally, located at the back of the 30S subunit body where it stabilizes the conformation of the head with respect to the body. The polypeptide is Small ribosomal subunit protein uS5 (Lactococcus lactis subsp. cremoris (strain MG1363)).